A 75-amino-acid polypeptide reads, in one-letter code: ATP synthase subunit c (75 aa).

Transmembrane regions (helical) follow at residues I9–F29 and F54–A74.

Belongs to the ATPase C chain family. F-type ATPases have 2 components, F(1) - the catalytic core - and F(0) - the membrane proton channel. F(1) has five subunits: alpha(3), beta(3), gamma(1), delta(1), epsilon(1). F(0) has three main subunits: a(1), b(2) and c(10-14). The alpha and beta chains form an alternating ring which encloses part of the gamma chain. F(1) is attached to F(0) by a central stalk formed by the gamma and epsilon chains, while a peripheral stalk is formed by the delta and b chains.

It is found in the cell inner membrane. F(1)F(0) ATP synthase produces ATP from ADP in the presence of a proton or sodium gradient. F-type ATPases consist of two structural domains, F(1) containing the extramembraneous catalytic core and F(0) containing the membrane proton channel, linked together by a central stalk and a peripheral stalk. During catalysis, ATP synthesis in the catalytic domain of F(1) is coupled via a rotary mechanism of the central stalk subunits to proton translocation. In terms of biological role, key component of the F(0) channel; it plays a direct role in translocation across the membrane. A homomeric c-ring of between 10-14 subunits forms the central stalk rotor element with the F(1) delta and epsilon subunits. This is ATP synthase subunit c from Pelagibacter ubique (strain HTCC1062).